The following is a 519-amino-acid chain: MSDLVKSSEVIETTEVPPHNNNNNKRHFKYDSEQRKQRLAGGVKLKDALMILCAGFALISDGYQNNVMSMMNKVFALEYPKEYTASLSTQVSNASLVGTIFGQVIIGLTADYIGRKWSIVTATCFLIFGTMMCAASHGKTVNGMFWMLTIFRGVTGFGIGAEYPSSSVTASEAANESVKRRGGAFILATNLPLSFGGPFALCIFLIVRRICGNHLDAIWRTMFAIGCFWPLSVFYFRLKMVTSELYTKSAIKQRAPYWLALKYYWPRLIGTCVAWFLYDFVTFPNGIFSAGIISNVIPKSEKNNLEKIAEWNLLLGAIALPGVFVGAYVVDILGRKYTMMIGFCGYIVFGLIVGCGYHQIKPITGLFIVFYGLMMSCGNFGPGNNMGLTSSESFATPIRGTAYGISAAIGKVGAVVGTKTFSPIQKNLGDKWTFIIAAICGLAGVLVTFIFIPHLKDEDLLEEDVKFKNYLIDNGWKGKFGIQEYDEEEDLEGSSEDSSDGEIVKNNTKNDVEKVDALK.

The disordered stretch occupies residues 1 to 32 (MSDLVKSSEVIETTEVPPHNNNNNKRHFKYDS). A helical membrane pass occupies residues 39–59 (LAGGVKLKDALMILCAGFALI). An N-linked (GlcNAc...) asparagine glycan is attached at Asn93. The next 3 helical transmembrane spans lie at 94 to 114 (ASLV…DYIG), 117 to 137 (WSIV…AASH), and 141 to 161 (VNGM…GIGA). The N-linked (GlcNAc...) asparagine glycan is linked to Asn175. The next 8 membrane-spanning stretches (helical) occupy residues 186 to 206 (ILAT…IFLI), 216 to 236 (DAIW…VFYF), 273 to 293 (VAWF…AGII), 313 to 333 (LLLG…VDIL), 337 to 357 (YTMM…GCGY), 363 to 383 (ITGL…FGPG), 404 to 424 (GISA…FSPI), and 432 to 452 (WTFI…FIFI). A compositionally biased stretch (acidic residues) spans 487–500 (EEEDLEGSSEDSSD). A disordered region spans residues 487-519 (EEEDLEGSSEDSSDGEIVKNNTKNDVEKVDALK). Asn506 is a glycosylation site (N-linked (GlcNAc...) asparagine). Residues 508-519 (TKNDVEKVDALK) show a composition bias toward basic and acidic residues.

Belongs to the major facilitator superfamily. Sugar transporter (TC 2.A.1.1) family.

Its subcellular location is the cell membrane. It catalyses the reaction sn-glycero-3-phospho-1D-myo-inositol(out) = sn-glycero-3-phospho-1D-myo-inositol(in). In terms of biological role, glycerophosphodiester transporter that mediates uptake of glycerophosphoinositol (GroPIns) as a source of inositol and phosphate. Does not possess detectable glycerophosphocholine (GroPCho) transport activity. Although no glycerophosphoinositol transport activity occurs in the absence of GIT1, C.albicans is still able to use glycerophosphoinositol as a phosphate source at pH 7.5, albeit slowly. Thus, a second, GIT1-independent, mechanism must exist for utilizing glycerophosphoinositol as a phosphate source at physiological pH. The expanded ability to utilize GroPIns and GroPCho results from the organism's pathogenic nature and its need to occupy a variety of environments within its host organism. This possibility is buttressed by the fact that GroPIns and GroPCho are present and abundant in human fluids. This Candida albicans (strain SC5314 / ATCC MYA-2876) (Yeast) protein is Glycerophosphoinositol permease 1.